The sequence spans 351 residues: Selenide, water dikinase (351 aa).

Residue Sec-15 is part of the active site. Sec-15 is a non-standard amino acid (selenocysteine). ATP contacts are provided by residues Lys-18 and 47–49 (DNE). Asp-50 provides a ligand contact to Mg(2+). ATP-binding positions include Asp-67, Asp-90, and 138 to 140 (GHS). Residue Asp-90 participates in Mg(2+) binding. Asp-227 provides a ligand contact to Mg(2+).

It belongs to the selenophosphate synthase 1 family. Class I subfamily. Homodimer. Mg(2+) is required as a cofactor.

The enzyme catalyses hydrogenselenide + ATP + H2O = selenophosphate + AMP + phosphate + 2 H(+). Synthesizes selenophosphate from selenide and ATP. The protein is Selenide, water dikinase of Nitratidesulfovibrio vulgaris (strain ATCC 29579 / DSM 644 / CCUG 34227 / NCIMB 8303 / VKM B-1760 / Hildenborough) (Desulfovibrio vulgaris).